The chain runs to 89 residues: Small ribosomal subunit protein uS15 (89 aa).

This sequence belongs to the universal ribosomal protein uS15 family. In terms of assembly, part of the 30S ribosomal subunit. Forms a bridge to the 50S subunit in the 70S ribosome, contacting the 23S rRNA.

Its function is as follows. One of the primary rRNA binding proteins, it binds directly to 16S rRNA where it helps nucleate assembly of the platform of the 30S subunit by binding and bridging several RNA helices of the 16S rRNA. Forms an intersubunit bridge (bridge B4) with the 23S rRNA of the 50S subunit in the ribosome. In Histophilus somni (strain 129Pt) (Haemophilus somnus), this protein is Small ribosomal subunit protein uS15.